A 364-amino-acid polypeptide reads, in one-letter code: Dihydroorotate dehydrogenase (quinone) (364 aa).

FMN contacts are provided by residues 61–65 (AGYDK) and Thr-85. A substrate-binding site is contributed by Lys-65. 110–114 (NRLGF) serves as a coordination point for substrate. FMN-binding residues include Asn-139 and Asn-170. Residue Asn-170 coordinates substrate. The Nucleophile role is filled by Ser-173. Position 175 (Asn-175) interacts with substrate. Positions 215 and 243 each coordinate FMN. 244 to 245 (NT) is a substrate binding site. FMN-binding positions include Gly-266, Gly-295, and 316–317 (YS).

This sequence belongs to the dihydroorotate dehydrogenase family. Type 2 subfamily. As to quaternary structure, monomer. FMN serves as cofactor.

It localises to the cell membrane. The catalysed reaction is (S)-dihydroorotate + a quinone = orotate + a quinol. Its pathway is pyrimidine metabolism; UMP biosynthesis via de novo pathway; orotate from (S)-dihydroorotate (quinone route): step 1/1. Catalyzes the conversion of dihydroorotate to orotate with quinone as electron acceptor. The polypeptide is Dihydroorotate dehydrogenase (quinone) (Brucella melitensis biotype 2 (strain ATCC 23457)).